The sequence spans 148 residues: Endoribonuclease YbeY (148 aa).

Zn(2+) is bound by residues histidine 113, histidine 117, and histidine 123.

This sequence belongs to the endoribonuclease YbeY family. It depends on Zn(2+) as a cofactor.

The protein resides in the cytoplasm. Single strand-specific metallo-endoribonuclease involved in late-stage 70S ribosome quality control and in maturation of the 3' terminus of the 16S rRNA. The protein is Endoribonuclease YbeY of Borrelia hermsii (strain HS1 / DAH).